We begin with the raw amino-acid sequence, 77 residues long: MSGFRILDSAGPQGQSSYTWEAKIAQVQHDMVAMINTFNQQIAGLSGTIMGRLDQSVIPKQQPPSSAAAISESEFED.

The disordered stretch occupies residues 56–77; that stretch reads SVIPKQQPPSSAAAISESEFED. Residues 65 to 77 are compositionally biased toward low complexity; the sequence is SSAAAISESEFED.

This is an uncharacterized protein from Frog virus 3 (isolate Goorha) (FV-3).